The following is a 373-amino-acid chain: 4-hydroxy-3-methylbut-2-en-1-yl diphosphate synthase (flavodoxin) (373 aa).

[4Fe-4S] cluster is bound by residues C270, C273, C305, and E312.

This sequence belongs to the IspG family. It depends on [4Fe-4S] cluster as a cofactor.

It carries out the reaction (2E)-4-hydroxy-3-methylbut-2-enyl diphosphate + oxidized [flavodoxin] + H2O + 2 H(+) = 2-C-methyl-D-erythritol 2,4-cyclic diphosphate + reduced [flavodoxin]. Its pathway is isoprenoid biosynthesis; isopentenyl diphosphate biosynthesis via DXP pathway; isopentenyl diphosphate from 1-deoxy-D-xylulose 5-phosphate: step 5/6. Its function is as follows. Converts 2C-methyl-D-erythritol 2,4-cyclodiphosphate (ME-2,4cPP) into 1-hydroxy-2-methyl-2-(E)-butenyl 4-diphosphate. In Pectobacterium atrosepticum (strain SCRI 1043 / ATCC BAA-672) (Erwinia carotovora subsp. atroseptica), this protein is 4-hydroxy-3-methylbut-2-en-1-yl diphosphate synthase (flavodoxin).